The following is a 411-amino-acid chain: Putative ion-transport protein YfeO (411 aa).

Helical transmembrane passes span 9-29, 54-74, 99-119, 149-169, 186-206, 223-243, 258-278, 296-316, 322-342, 343-363, and 386-406; these read MLLL…VLIA, DSPF…GLII, ALPG…SLGP, ILAS…AALI, LFAP…FFHP, IASG…AVWC, VLIL…GGPL, LGAG…VIAA, GGRI…LHAH, VEAV…VLVV, and LLCI…LLAA.

The protein belongs to the chloride channel (TC 2.A.49) family.

It localises to the cell membrane. The polypeptide is Putative ion-transport protein YfeO (Salmonella agona (strain SL483)).